A 149-amino-acid polypeptide reads, in one-letter code: Small ribosomal subunit protein uS13 (149 aa).

It belongs to the universal ribosomal protein uS13 family. Part of the 30S ribosomal subunit. Forms a loose heterodimer with protein S19. Forms two bridges to the 50S subunit in the 70S ribosome.

Located at the top of the head of the 30S subunit, it contacts several helices of the 16S rRNA. In the 70S ribosome it contacts the 23S rRNA (bridge B1a) and protein L5 of the 50S subunit (bridge B1b), connecting the 2 subunits; these bridges are implicated in subunit movement. The sequence is that of Small ribosomal subunit protein uS13 from Thermococcus kodakarensis (strain ATCC BAA-918 / JCM 12380 / KOD1) (Pyrococcus kodakaraensis (strain KOD1)).